The sequence spans 328 residues: Methionyl-tRNA formyltransferase (328 aa).

110–113 (SLLP) is a (6S)-5,6,7,8-tetrahydrofolate binding site.

This sequence belongs to the Fmt family.

The enzyme catalyses L-methionyl-tRNA(fMet) + (6R)-10-formyltetrahydrofolate = N-formyl-L-methionyl-tRNA(fMet) + (6S)-5,6,7,8-tetrahydrofolate + H(+). Its function is as follows. Attaches a formyl group to the free amino group of methionyl-tRNA(fMet). The formyl group appears to play a dual role in the initiator identity of N-formylmethionyl-tRNA by promoting its recognition by IF2 and preventing the misappropriation of this tRNA by the elongation apparatus. The sequence is that of Methionyl-tRNA formyltransferase from Prochlorococcus marinus (strain MIT 9312).